The chain runs to 399 residues: Elongation factor Tu (399 aa).

Residues 10 to 204 (KPHVNIGTIG…AVDASIPEPE (195 aa)) form the tr-type G domain. The tract at residues 19-26 (GHVDHGKT) is G1. 19–26 (GHVDHGKT) is a binding site for GTP. Thr-26 serves as a coordination point for Mg(2+). Positions 60–64 (GITIN) are G2. The segment at 81–84 (DCPG) is G3. GTP-binding positions include 81-85 (DCPGH) and 136-139 (NKCD). The tract at residues 136–139 (NKCD) is G4. Residues 174–176 (SGL) form a G5 region.

It belongs to the TRAFAC class translation factor GTPase superfamily. Classic translation factor GTPase family. EF-Tu/EF-1A subfamily. As to quaternary structure, monomer.

The protein localises to the cytoplasm. It carries out the reaction GTP + H2O = GDP + phosphate + H(+). GTP hydrolase that promotes the GTP-dependent binding of aminoacyl-tRNA to the A-site of ribosomes during protein biosynthesis. This chain is Elongation factor Tu, found in Prochlorococcus marinus (strain SARG / CCMP1375 / SS120).